We begin with the raw amino-acid sequence, 476 residues long: Membrane-bound lytic murein transglycosylase F (476 aa).

The signal sequence occupies residues 1 to 16 (MIKTLFIILLCGILSA). Residues 17–259 (CQPVDIQDVD…HLNEKYFGHV (243 aa)) are non-LT domain. An LT domain region spans residues 260–476 (KRFDYVDTRA…VPAKSHVSAQ (217 aa)). E304 is a catalytic residue.

In the N-terminal section; belongs to the bacterial solute-binding protein 3 family. The protein in the C-terminal section; belongs to the transglycosylase Slt family.

It is found in the cell outer membrane. It catalyses the reaction Exolytic cleavage of the (1-&gt;4)-beta-glycosidic linkage between N-acetylmuramic acid (MurNAc) and N-acetylglucosamine (GlcNAc) residues in peptidoglycan, from either the reducing or the non-reducing ends of the peptidoglycan chains, with concomitant formation of a 1,6-anhydrobond in the MurNAc residue.. Murein-degrading enzyme that degrades murein glycan strands and insoluble, high-molecular weight murein sacculi, with the concomitant formation of a 1,6-anhydromuramoyl product. Lytic transglycosylases (LTs) play an integral role in the metabolism of the peptidoglycan (PG) sacculus. Their lytic action creates space within the PG sacculus to allow for its expansion as well as for the insertion of various structures such as secretion systems and flagella. The sequence is that of Membrane-bound lytic murein transglycosylase F from Shewanella frigidimarina (strain NCIMB 400).